A 195-amino-acid chain; its full sequence is Guanylate kinase (195 aa).

The 180-residue stretch at 7–186 folds into the Guanylate kinase-like domain; it reads GVLLVLSSPS…SVEEISSILD (180 aa). 14 to 21 contributes to the ATP binding site; that stretch reads SPSGAGKT.

It belongs to the guanylate kinase family.

It is found in the cytoplasm. It carries out the reaction GMP + ATP = GDP + ADP. Its function is as follows. Essential for recycling GMP and indirectly, cGMP. This is Guanylate kinase from Wolbachia sp. subsp. Brugia malayi (strain TRS).